The sequence spans 104 residues: Flagellar hook-basal body complex protein FliE (104 aa).

Belongs to the FliE family.

The protein localises to the bacterial flagellum basal body. This is Flagellar hook-basal body complex protein FliE from Escherichia fergusonii (strain ATCC 35469 / DSM 13698 / CCUG 18766 / IAM 14443 / JCM 21226 / LMG 7866 / NBRC 102419 / NCTC 12128 / CDC 0568-73).